Here is a 942-residue protein sequence, read N- to C-terminus: DNA mismatch repair protein MutS (942 aa).

613-620 (GPNMAGKS) is a binding site for ATP.

This sequence belongs to the DNA mismatch repair MutS family.

Functionally, this protein is involved in the repair of mismatches in DNA. It is possible that it carries out the mismatch recognition step. This protein has a weak ATPase activity. The chain is DNA mismatch repair protein MutS from Clostridium botulinum (strain Eklund 17B / Type B).